We begin with the raw amino-acid sequence, 398 residues long: GTP cyclohydrolase-2 (398 aa).

The interval 1-172 (MNTPTHTHPH…TAAAGASTTE (172 aa)) is unknown. The GTP cyclohydrolase II stretch occupies residues 173–398 (YELVTRTPVP…VKSIPKTGHA (226 aa)). 220-224 (RVHSS) contacts GTP. Zn(2+)-binding residues include Cys225, Cys236, and Cys238. GTP contacts are provided by residues Gln241, 263–265 (EGR), and Thr285. Asp297 acts as the Proton acceptor in catalysis. Arg299 functions as the Nucleophile in the catalytic mechanism. 2 residues coordinate GTP: Ser320 and Lys325. Residues 375-398 (QRPQDPSETVDGETVKSIPKTGHA) form a disordered region.

This sequence in the C-terminal section; belongs to the GTP cyclohydrolase II family. Zn(2+) serves as cofactor.

The enzyme catalyses GTP + 4 H2O = 2,5-diamino-6-hydroxy-4-(5-phosphoribosylamino)-pyrimidine + formate + 2 phosphate + 3 H(+). Its pathway is cofactor biosynthesis; riboflavin biosynthesis; 5-amino-6-(D-ribitylamino)uracil from GTP: step 1/4. Catalyzes the conversion of GTP to 2,5-diamino-6-ribosylamino-4(3H)-pyrimidinone 5'-phosphate (DARP), formate and pyrophosphate. This Xylella fastidiosa (strain 9a5c) protein is GTP cyclohydrolase-2 (ribA).